The primary structure comprises 125 residues: MAGLSKDQLIESISSMSVIELSELVKALEEKFGVSAAAPAPAVVAGTSPAVATEEKTEFNVILGSVGTSKINVIKVVREVTGLGLKEAKDLVDGAPKTVKENVAKAEAEEIKKKFTEVGATVELK.

Belongs to the bacterial ribosomal protein bL12 family. Homodimer. Part of the ribosomal stalk of the 50S ribosomal subunit. Forms a multimeric L10(L12)X complex, where L10 forms an elongated spine to which 2 to 4 L12 dimers bind in a sequential fashion. Binds GTP-bound translation factors.

Its function is as follows. Forms part of the ribosomal stalk which helps the ribosome interact with GTP-bound translation factors. Is thus essential for accurate translation. In Endomicrobium trichonymphae, this protein is Large ribosomal subunit protein bL12.